We begin with the raw amino-acid sequence, 111 residues long: Large ribosomal subunit protein uL23 (111 aa).

The protein belongs to the universal ribosomal protein uL23 family. In terms of assembly, part of the 50S ribosomal subunit. Contacts protein L29, and trigger factor when it is bound to the ribosome.

In terms of biological role, one of the early assembly proteins it binds 23S rRNA. One of the proteins that surrounds the polypeptide exit tunnel on the outside of the ribosome. Forms the main docking site for trigger factor binding to the ribosome. The protein is Large ribosomal subunit protein uL23 of Nitrosomonas europaea (strain ATCC 19718 / CIP 103999 / KCTC 2705 / NBRC 14298).